The following is a 63-amino-acid chain: Protein DsrB (63 aa).

This sequence belongs to the DsrB family.

The polypeptide is Protein DsrB (Yersinia pseudotuberculosis serotype O:3 (strain YPIII)).